The sequence spans 71 residues: ATP synthase F(0) complex subunit e, mitochondrial (71 aa).

Position 34 is an N6-acetyllysine (K34).

The protein belongs to the ATPase e subunit family. Component of the ATP synthase complex composed at least of ATP5F1A/subunit alpha, ATP5F1B/subunit beta, ATP5MC1/subunit c (homooctomer), MT-ATP6/subunit a, MT-ATP8/subunit 8, ATP5ME/subunit e, ATP5MF/subunit f, ATP5MG/subunit g, ATP5MK/subunit k, ATP5MJ/subunit j, ATP5F1C/subunit gamma, ATP5F1D/subunit delta, ATP5F1E/subunit epsilon, ATP5PF/subunit F6, ATP5PB/subunit b, ATP5PD/subunit d, ATP5PO/subunit OSCP. ATP synthase complex consists of a soluble F(1) head domain (subunits alpha(3) and beta(3)) - the catalytic core - and a membrane F(0) domain - the membrane proton channel (subunits c, a, 8, e, f, g, k and j). These two domains are linked by a central stalk (subunits gamma, delta, and epsilon) rotating inside the F1 region and a stationary peripheral stalk (subunits F6, b, d, and OSCP).

It is found in the mitochondrion. The protein resides in the mitochondrion inner membrane. Subunit e, of the mitochondrial membrane ATP synthase complex (F(1)F(0) ATP synthase or Complex V) that produces ATP from ADP in the presence of a proton gradient across the membrane which is generated by electron transport complexes of the respiratory chain. ATP synthase complex consist of a soluble F(1) head domain - the catalytic core - and a membrane F(1) domain - the membrane proton channel. These two domains are linked by a central stalk rotating inside the F(1) region and a stationary peripheral stalk. During catalysis, ATP synthesis in the catalytic domain of F(1) is coupled via a rotary mechanism of the central stalk subunits to proton translocation. In vivo, can only synthesize ATP although its ATP hydrolase activity can be activated artificially in vitro. Part of the complex F(0) domain. This chain is ATP synthase F(0) complex subunit e, mitochondrial, found in Bos taurus (Bovine).